We begin with the raw amino-acid sequence, 215 residues long: Pyrophosphatase PpaX (215 aa).

D9 (nucleophile) is an active-site residue.

It belongs to the HAD-like hydrolase superfamily. PpaX family. It depends on Mg(2+) as a cofactor.

The enzyme catalyses diphosphate + H2O = 2 phosphate + H(+). Functionally, hydrolyzes pyrophosphate formed during P-Ser-HPr dephosphorylation by HPrK/P. Might play a role in controlling the intracellular pyrophosphate pool. This chain is Pyrophosphatase PpaX, found in Halalkalibacterium halodurans (strain ATCC BAA-125 / DSM 18197 / FERM 7344 / JCM 9153 / C-125) (Bacillus halodurans).